Consider the following 222-residue polypeptide: Transmembrane reductase CYB561D2 (222 aa).

The Cytoplasmic portion of the chain corresponds to 2–17 (ALSVETESHIYRALRT). Positions 14–217 (ALRTVSGAAA…NQVSNAYLYR (204 aa)) constitute a Cytochrome b561 domain. A helical transmembrane segment spans residues 18–38 (VSGAAAHLVALGFTIFVAVLA). The Lumenal segment spans residues 39–46 (RPGSSLFS). The chain crosses the membrane as a helical span at residues 47 to 67 (WHPVLMSLAFSFLMTEALLVF). His-48 contacts heme b. The Cytoplasmic portion of the chain corresponds to 68-85 (SPESSLLRSLSRKGRARC). His-86 and His-120 together coordinate heme b. Residues 86 to 106 (HWVLQLLALLCALLGLGLVIL) form a helical membrane-spanning segment. Over 107-122 (HKEQLGKAHLATWHGR) the chain is Lumenal. The helical transmembrane segment at 123 to 143 (AGLLAVLWAGLQCSGGVGLLY) threads the bilayer. Topologically, residues 144–162 (PKLLPRWPLAKLKLYHATS) are cytoplasmic. Position 159 (His-159) interacts with heme b. Residues 163–183 (GLVGYLLGGASLLLGMCSLWF) traverse the membrane as a helical segment. Over 184-186 (TAT) the chain is Lumenal. Residues 187 to 207 (VTGGVWYLAVLCPVITSLVIM) form a helical membrane-spanning segment. Residues 208 to 222 (NQVSNAYLYRKRIQP) lie on the Cytoplasmic side of the membrane.

The cofactor is heme b.

The protein localises to the endoplasmic reticulum membrane. The protein resides in the cytoplasmic vesicle membrane. It catalyses the reaction monodehydro-L-ascorbate radical(out) + L-ascorbate(in) = monodehydro-L-ascorbate radical(in) + L-ascorbate(out). The enzyme catalyses Fe(3+)(out) + L-ascorbate(in) = monodehydro-L-ascorbate radical(in) + Fe(2+)(out) + H(+). In terms of biological role, transmembrane reductase that may use ascorbate as an electron donor in the cytoplasm and transfer electrons across endoplasmic reticulum membranes to reduce monodehydro-L-ascorbate radical and iron cations Fe(3+) in the lumen of that compartment. The chain is Transmembrane reductase CYB561D2 from Bos taurus (Bovine).